The following is a 105-amino-acid chain: Synaptic plasticity regulator PANTS (105 aa).

It belongs to the UPF0545 family. In terms of assembly, interacts with RTN4 isoform A/Nogo-A; the interaction results in enhanced RTN4-mediated inhibition of AMPA receptor clustering. Also interacts with NCAM1, RANBP2 and CCT8. In terms of processing, rapidly degraded by proteolysis following neuronal stimulation, resulting in increased AMPA receptor clustering.

The protein resides in the synapse. It localises to the synaptic cleft. Negatively regulates long-term potentiation and modulates adult synaptic plasticity. Stabilizes the interaction of RTN4 isoform A/Nogo-A with its receptors, inhibiting clustering of postsynaptic AMPA receptors at synaptic sites. Upon neuronal stimulation, degraded at synapses, reducing RTN4 signaling and allowing AMPA receptor clustering at individual synapses. The sequence is that of Synaptic plasticity regulator PANTS from Pongo abelii (Sumatran orangutan).